The chain runs to 110 residues: Urease subunit beta (110 aa).

The protein belongs to the urease beta subunit family. Heterotrimer of UreA (gamma), UreB (beta) and UreC (alpha) subunits. Three heterotrimers associate to form the active enzyme.

The protein localises to the cytoplasm. It carries out the reaction urea + 2 H2O + H(+) = hydrogencarbonate + 2 NH4(+). The protein operates within nitrogen metabolism; urea degradation; CO(2) and NH(3) from urea (urease route): step 1/1. The sequence is that of Urease subunit beta from Pseudoalteromonas translucida (strain TAC 125).